Consider the following 70-residue polypeptide: Movement protein TGBp3 (70 aa).

Residues 1-4 are Lumenal-facing; it reads MFPR. A helical transmembrane segment spans residues 5–25; sequence SGLGLAVAAAVVAYLVLLLAQ. At 26-70 the chain is on the cytoplasmic side; that stretch reads QLYMSNSSQCTIVITGESVSVVGCVYSEAFIELVKGLKPYYHPLG.

It belongs to the Tymovirales TGBp3 protein family.

The protein localises to the host endoplasmic reticulum membrane. Functionally, plays a role in viral cell-to-cell propagation, by facilitating genome transport to neighboring plant cells through plasmosdesmata. May induce the formation of granular vesicles derived from the Endoplasmic reticulum, which align on actin filaments. The chain is Movement protein TGBp3 from Crataegus (hawthorn).